A 180-amino-acid polypeptide reads, in one-letter code: Crossover junction endodeoxyribonuclease RuvC (180 aa).

Residues Asp7, Glu66, and Asp138 contribute to the active site. Residues Asp7, Glu66, and Asp138 each coordinate Mg(2+).

It belongs to the RuvC family. As to quaternary structure, homodimer which binds Holliday junction (HJ) DNA. The HJ becomes 2-fold symmetrical on binding to RuvC with unstacked arms; it has a different conformation from HJ DNA in complex with RuvA. In the full resolvosome a probable DNA-RuvA(4)-RuvB(12)-RuvC(2) complex forms which resolves the HJ. It depends on Mg(2+) as a cofactor.

It is found in the cytoplasm. It catalyses the reaction Endonucleolytic cleavage at a junction such as a reciprocal single-stranded crossover between two homologous DNA duplexes (Holliday junction).. Its function is as follows. The RuvA-RuvB-RuvC complex processes Holliday junction (HJ) DNA during genetic recombination and DNA repair. Endonuclease that resolves HJ intermediates. Cleaves cruciform DNA by making single-stranded nicks across the HJ at symmetrical positions within the homologous arms, yielding a 5'-phosphate and a 3'-hydroxyl group; requires a central core of homology in the junction. The consensus cleavage sequence is 5'-(A/T)TT(C/G)-3'. Cleavage occurs on the 3'-side of the TT dinucleotide at the point of strand exchange. HJ branch migration catalyzed by RuvA-RuvB allows RuvC to scan DNA until it finds its consensus sequence, where it cleaves and resolves the cruciform DNA. The chain is Crossover junction endodeoxyribonuclease RuvC from Herminiimonas arsenicoxydans.